The chain runs to 335 residues: Acyl-CoA Delta(11) desaturase (335 aa).

3 consecutive transmembrane segments (helical) span residues 39 to 59, 64 to 84, and 98 to 118; these read LLTF…CFTS, TIIL…AGAH, and LQII…IHWI. A Histidine box-1 motif is present at residues 84–89; it reads HRLWAH. The Histidine box-2 signature appears at 121 to 125; that stretch reads HRMHH. Transmembrane regions (helical) follow at residues 182-202 and 213-235; these read AIPF…MYFW and TMLR…HLYG. A Histidine box-3 motif is present at residues 261–265; sequence HNYHH. The segment at 312-335 is disordered; sequence MKRTGDGTDVSGQKYSCESSEVLQ. Residues 321-335 are compositionally biased toward polar residues; that stretch reads VSGQKYSCESSEVLQ.

It belongs to the fatty acid desaturase type 1 family. Fe cation is required as a cofactor. Detected in pheromone gland.

The protein resides in the membrane. It catalyses the reaction an 11,12-saturated fatty acyl-CoA + 2 Fe(II)-[cytochrome b5] + O2 + 2 H(+) = an (11Z)-Delta(11)-fatty acyl-CoA + 2 Fe(III)-[cytochrome b5] + 2 H2O. In terms of biological role, catalyzes the formation of Delta(11) fatty acyl precursors in the pheromone gland, with a preference for myristic acid. The polypeptide is Acyl-CoA Delta(11) desaturase (Choristoneura rosaceana (Oblique banded leafroller)).